Here is a 150-residue protein sequence, read N- to C-terminus: Lipoprotein signal peptidase (150 aa).

Transmembrane regions (helical) follow at residues 5-25 (LSLV…NWVV), 59-79 (QQWF…WFLW), and 83-103 (GQNW…GNFI). Active-site residues include D113 and D129. A helical membrane pass occupies residues 124 to 144 (IFNIADILLSVGFVVLFIAIL).

Belongs to the peptidase A8 family.

Its subcellular location is the cell membrane. It carries out the reaction Release of signal peptides from bacterial membrane prolipoproteins. Hydrolyzes -Xaa-Yaa-Zaa-|-(S,diacylglyceryl)Cys-, in which Xaa is hydrophobic (preferably Leu), and Yaa (Ala or Ser) and Zaa (Gly or Ala) have small, neutral side chains.. The protein operates within protein modification; lipoprotein biosynthesis (signal peptide cleavage). Its function is as follows. This protein specifically catalyzes the removal of signal peptides from prolipoproteins. This chain is Lipoprotein signal peptidase, found in Lactococcus lactis subsp. cremoris (strain MG1363).